Consider the following 229-residue polypeptide: Extracellular endonuclease (229 aa).

An N-terminal signal peptide occupies residues 1–19 (MSARFIAVFCLFFTVTAHA). The interval 69–95 (RADASNGNTSSRPGRSGISASAGKPVG) is disordered. Positions 71-81 (DASNGNTSSRP) are enriched in polar residues.

This sequence belongs to the EndA/NucM nuclease family.

The protein resides in the secreted. The sequence is that of Extracellular endonuclease (endX) from Pseudomonas fluorescens biotype A.